A 904-amino-acid polypeptide reads, in one-letter code: Pantothenate kinase 2 (904 aa).

Residues 1–56 are disordered; the sequence is MAANNNSDPILDEGGGGGVKHEAVGEAGEGKGGGGGAAATQAPAAMLPRSGSRPQL. Positions 1–472 are pantothenate kinase; sequence MAANNNSDPI…LGDLNEKISW (472 aa). A 4'-phosphopantetheine phosphatase region spans residues 473–904; it reads MEKFVQKGTQ…DCICKFEPVP (432 aa). Residues aspartate 735, asparagine 736, and aspartate 771 each coordinate Mn(2+). The Subfamily II EGMGR motif signature appears at 855 to 859; that stretch reads EGMGR.

This sequence in the N-terminal section; belongs to the type II pantothenate kinase family. The protein in the C-terminal section; belongs to the damage-control phosphatase family. Phosphopantetheine phosphatase II subfamily. Mn(2+) serves as cofactor. Requires Ni(2+) as cofactor.

It catalyses the reaction (R)-pantothenate + ATP = (R)-4'-phosphopantothenate + ADP + H(+). The catalysed reaction is (R)-4'-phosphopantothenate + H2O = (R)-pantothenate + phosphate. It carries out the reaction (R)-4'-phosphopantetheine + H2O = (R)-pantetheine + phosphate. The enzyme catalyses (R)-4'-phosphopantetheine sulfonate + H2O = (R)-pantetheine sulfonate + phosphate. The protein operates within cofactor biosynthesis; coenzyme A biosynthesis; CoA from (R)-pantothenate: step 1/5. Catalyzes the phosphorylation of pantothenate the first step in CoA biosynthesis. May play a role in the physiological regulation of the intracellular CoA concentration. Functionally redudant with PANK1. The phosphatase activity shows preference for normal or oxidatively damaged intermediates of 4'-phosphopantetheine, which provides strong indirect evidence that the phosphatase activity pre-empts damage in the CoA pathway. Hydrolyzing excess 4'-phosphopantetheine could constitute a directed overflow mechanism to prevent its oxidation to the S-sulfonate, sulfonate, or other forms. Hydrolyzing 4'-phosphopantetheine sulfonate or S-sulfonate would forestall their conversion to inactive forms of CoA and acyl carrier protein. This Oryza sativa subsp. japonica (Rice) protein is Pantothenate kinase 2.